The primary structure comprises 1189 residues: Pesticidal crystal protein Cry1Ca (1189 aa).

It belongs to the delta endotoxin family.

Functionally, promotes colloidosmotic lysis by binding to the midgut epithelial cells of many lepidopteran larvae including Spodoptera species. In Bacillus thuringiensis subsp. aizawai, this protein is Pesticidal crystal protein Cry1Ca (cry1Ca).